A 441-amino-acid chain; its full sequence is Matrix extracellular phosphoglycoprotein (441 aa).

A signal peptide spans 1 to 24 (MTPEGLMKMQAVSVGLLLFSMTWA). Asparagine 82 carries an N-linked (GlcNAc...) asparagine glycan. Residues 137–441 (QSSPVKSKHT…SGSSSESHGD (305 aa)) are disordered. Basic residues predominate over residues 142–156 (KSKHTKHTRQTRRST). Positions 178–200 (PDLLVRGDNDVPPFSGDGQHFMH) are dentonin. The short motif at 183–185 (RGD) is the Cell attachment site element. Residue serine 192 is glycosylated (O-linked (Xyl...) (chondroitin sulfate) serine). Positions 211–223 (PESSTSRPLSGSS) are enriched in polar residues. The segment covering 313–325 (SREKVKGGVEHAG) has biased composition (basic and acidic residues). Polar residues-rich tracts occupy residues 349-358 (GNQLTLTASQ) and 391-405 (GQNN…SQRR). Positions 424–441 (RDSSESSSSGSSSESHGD) are ASARM motif; interaction with PHEX. Over residues 428 to 441 (ESSSSGSSSESHGD) the composition is skewed to low complexity.

The protein belongs to the PF07175/osteoregulin family. In terms of assembly, interacts (via ASARM motif) with PHEX; the interaction is zinc-dependent. Post-translationally, phosphorylated on serine residues in the ASARM motif; the phosphorylation is important for the inhibition of bone mineralization. Cleaved by CTSB/cathepsin B; the cleavage is blocked by metalloprotease PHEX. Expressed in osteocytes (at protein level). Expressed by chondrocytes, specifically in the hypertrophic zone of the bone growth plate (at protein level). Expressed in osteoblasts in bone (at protein level). Expressed by osteoblasts within the metaphysis (at protein level). Expressed at low levels in white fat, brown fat, testes, brain and aorta. Expressed in the craniofacial complex (at protein level). Expressed in odontoblasts, ameloblasts and in predentin during tooth development (at protein level). Expressed in the kidney (at protein level). Expressed in osteocytes in mandibular condylar cartilage and tibial cartilage (at protein level). Expressed in salivary glands.

It localises to the secreted. Its subcellular location is the extracellular space. The protein localises to the extracellular matrix. In terms of biological role, regulates renal phosphate and uric acid excretion. Regulates bone mineralization by osteoblasts and cartilage mineralization by chondrocytes. Regulates the mineralization of the extracellular matrix of the craniofacial complex, such as teeth, bone and cartilage. Increases dental pulp stem cell proliferation. This chain is Matrix extracellular phosphoglycoprotein, found in Mus musculus (Mouse).